Here is a 186-residue protein sequence, read N- to C-terminus: MISTNDLRPGIIVDLDGTLYLIVTAQHVKPGKGSAFVRVKMKKLSDGSTIEQTFRAGEKVQRAYLETKQMQYLYSDGEHFVFMDTDTYEQVTLSGDIMSDVQQWLKEGMMVNVQFYQGKAVGIEVPTFVELEVVETEPGVRGDTAQGGSKPAKLETGAVVQVPLFITEGDIIRVDTRTGEYVERVG.

Belongs to the elongation factor P family.

The protein resides in the cytoplasm. It participates in protein biosynthesis; polypeptide chain elongation. Functionally, involved in peptide bond synthesis. Stimulates efficient translation and peptide-bond synthesis on native or reconstituted 70S ribosomes in vitro. Probably functions indirectly by altering the affinity of the ribosome for aminoacyl-tRNA, thus increasing their reactivity as acceptors for peptidyl transferase. The polypeptide is Elongation factor P (Coprothermobacter proteolyticus (strain ATCC 35245 / DSM 5265 / OCM 4 / BT)).